The primary structure comprises 235 residues: Small ribosomal subunit protein uS2c (235 aa).

This sequence belongs to the universal ribosomal protein uS2 family.

Its subcellular location is the plastid. The protein localises to the chloroplast. The protein is Small ribosomal subunit protein uS2c (rps2) of Huperzia lucidula (Shining clubmoss).